An 876-amino-acid chain; its full sequence is MNEKYAALKSNVSMLGHLLGNTIRDAHGEELLAKVETIRKLSKTARAGSDNDRNALIEEIKSLPNDQLTPVARAFSQFLNLTNMAEQYHTISRHCEEHVCEPDAISSLFSKLSQNNISKLDTVQAVRELNIELVLTAHPTEIARRTMINKLVKINECLSKLELSDISFSEREKTERRLEQLIAQAWHSDVIRQERPTPLDEAKWGFAVVENSLWQGIPDFLREFDQRLENHLGEGLPIDARPVHMSSWMGGDRDGNPFVTHTITREVMLLSRWKAADLYLKDVNELISELSMVKCTDEVRKLAGDQHEPYRAILKQLRTLLNDTLENLDAQMKGELTNNKPILRNAEQLWLPLHACYQSLHACGMGIIAEGSLLDTLRRVKAFGAHLVRLDIRQESTRHSNVLSELTRYLGIGDYDQWSEQDKISFLVNELSSKRPLLPRDWTPTAEVQEVIDTCKIVAEQSKEALGSYVISMARTASDVLAVHLLLQEAGCPFRMDVCPLFETLDDLNRSKEVMEQLFSIDWYRGFIQNHQMVMIGYSDSAKDAGVMSAGWAQYSAMEALVDVCEKESIELTLFHGRGGTIGRGGAPAHAALLSQPPKSLKGGLRVTEQGEMIRFKLGLPEVAVNSFNLYASAILEANLLPPPEPKQEWRDLMEVLSEVSCEAYRNIVRGEKDFVPYFRAATPELELGKLPLGSRPAKRNPNGGVESLRAIPWIFSWSQNRLVLPAWLGAGEAIQYSIDKGHQELLEEMCREWPFFSTRLGMLEMVYTKCNPQMSEYYDQRLTDKSLWPLGVRLRNQLQADIKAVLNVENSDHLMESDPWGSESIRLRNIYVDPLNMLQAELLYRTRQQEETSPELEEALMVTIAGIAAGMRNTG.

Active-site residues include H138 and K543.

The protein belongs to the PEPCase type 1 family. Mg(2+) is required as a cofactor.

The catalysed reaction is oxaloacetate + phosphate = phosphoenolpyruvate + hydrogencarbonate. Functionally, forms oxaloacetate, a four-carbon dicarboxylic acid source for the tricarboxylic acid cycle. The protein is Phosphoenolpyruvate carboxylase of Aliivibrio salmonicida (strain LFI1238) (Vibrio salmonicida (strain LFI1238)).